Here is a 290-residue protein sequence, read N- to C-terminus: 4-hydroxy-tetrahydrodipicolinate synthase (290 aa).

Pyruvate is bound at residue T44. Y132 acts as the Proton donor/acceptor in catalysis. K160 (schiff-base intermediate with substrate) is an active-site residue. I202 serves as a coordination point for pyruvate.

This sequence belongs to the DapA family. As to quaternary structure, homotetramer; dimer of dimers.

It localises to the cytoplasm. The enzyme catalyses L-aspartate 4-semialdehyde + pyruvate = (2S,4S)-4-hydroxy-2,3,4,5-tetrahydrodipicolinate + H2O + H(+). Its pathway is amino-acid biosynthesis; L-lysine biosynthesis via DAP pathway; (S)-tetrahydrodipicolinate from L-aspartate: step 3/4. Catalyzes the condensation of (S)-aspartate-beta-semialdehyde [(S)-ASA] and pyruvate to 4-hydroxy-tetrahydrodipicolinate (HTPA). In Trichlorobacter lovleyi (strain ATCC BAA-1151 / DSM 17278 / SZ) (Geobacter lovleyi), this protein is 4-hydroxy-tetrahydrodipicolinate synthase.